Reading from the N-terminus, the 357-residue chain is Pre-mRNA-splicing factor RBM22 homolog (357 aa).

The C3H1-type zinc finger occupies 153-180 (RNMARVCSFWRKNSCNRGDECPYLHKEI). Positions 222–295 (NKICIQGISE…CNLTVHLQDN (74 aa)) constitute an RRM domain.

The protein belongs to the SLT11 family. In terms of assembly, probable component of the spliceosome C complex.

The protein resides in the nucleus. Functionally, involved in pre-mRNA splicing. Binds RNA. The polypeptide is Pre-mRNA-splicing factor RBM22 homolog (Plasmodium falciparum (isolate 3D7)).